A 105-amino-acid polypeptide reads, in one-letter code: Large ribosomal subunit protein eL30 (105 aa).

Residues Lys22, Lys53, and Lys83 each participate in a glycyl lysine isopeptide (Lys-Gly) (interchain with G-Cter in ubiquitin) cross-link.

The protein belongs to the eukaryotic ribosomal protein eL30 family. In terms of assembly, component of the large ribosomal subunit (LSU). Mature yeast ribosomes consist of a small (40S) and a large (60S) subunit. The 40S small subunit contains 1 molecule of ribosomal RNA (18S rRNA) and 33 different proteins (encoded by 57 genes). The large 60S subunit contains 3 rRNA molecules (25S, 5.8S and 5S rRNA) and 46 different proteins (encoded by 81 genes).

The protein localises to the cytoplasm. Functionally, component of the ribosome, a large ribonucleoprotein complex responsible for the synthesis of proteins in the cell. The small ribosomal subunit (SSU) binds messenger RNAs (mRNAs) and translates the encoded message by selecting cognate aminoacyl-transfer RNA (tRNA) molecules. The large subunit (LSU) contains the ribosomal catalytic site termed the peptidyl transferase center (PTC), which catalyzes the formation of peptide bonds, thereby polymerizing the amino acids delivered by tRNAs into a polypeptide chain. The nascent polypeptides leave the ribosome through a tunnel in the LSU and interact with protein factors that function in enzymatic processing, targeting, and the membrane insertion of nascent chains at the exit of the ribosomal tunnel. In Saccharomyces cerevisiae (strain ATCC 204508 / S288c) (Baker's yeast), this protein is Large ribosomal subunit protein eL30.